The following is a 1835-amino-acid chain: COPII coat assembly protein sec16 (1835 aa).

Disordered regions lie at residues 33 to 295, 378 to 866, 1040 to 1068, 1376 to 1404, 1422 to 1485, 1512 to 1682, and 1695 to 1835; these read SKKE…RKST, DLLL…APVP, QSLG…DPRS, SDAA…ISRS, LPGT…HGMP, EDSA…LGEE, and VNKK…VMAK. Residues 123 to 133 are compositionally biased toward polar residues; that stretch reads NVPTENGNVDI. Residues 138–148 show a composition bias toward basic and acidic residues; it reads RLEEHVAEEPH. Polar residues-rich tracts occupy residues 153–164 and 424–459; these read ENSTGLASQNDA and VSYT…SYFS. Residues 473 to 482 are compositionally biased toward basic and acidic residues; it reads SFAERSKEGY. Pro residues predominate over residues 512 to 526; the sequence is VPQPPPRSSSIPAPP. Positions 624 to 638 are enriched in low complexity; it reads NLLAPNVPSAPAVPS. Positions 655–667 are enriched in pro residues; that stretch reads KPPPSPRYSPAPP. Residues 668-678 show a composition bias toward low complexity; that stretch reads QSTNAAAAAPP. A compositionally biased stretch (polar residues) spans 682-691; it reads YASQPASISG. Basic and acidic residues predominate over residues 708-724; that stretch reads YHEKIHYQDQGQSEERP. The span at 741-752 shows a compositional bias: polar residues; that stretch reads SEQPVSSENKGP. Over residues 817–832 the composition is skewed to low complexity; that stretch reads PRRSQTQSPSQTLSPR. Composition is skewed to polar residues over residues 848–857 and 1040–1059; these read HGSTSPTRTV and QSLG…NAPS. Over residues 1447-1458 the composition is skewed to low complexity; sequence GRSSMDSQRSSS. Composition is skewed to polar residues over residues 1516–1533 and 1553–1562; these read SGAQ…SDSA and QGVSTTSQPD. Composition is skewed to basic and acidic residues over residues 1588 to 1606 and 1623 to 1656; these read DGVR…KSFM and KAER…EKKG. Residues 1728-1739 are compositionally biased toward pro residues; sequence GPPPAMATPPPT. Over residues 1740–1759 the composition is skewed to low complexity; that stretch reads GASGSRPSSSAGAPPSVSAS. Residues 1760 to 1772 are compositionally biased toward pro residues; it reads PAPPSLGAPPPAI.

Belongs to the SEC16 family.

The protein localises to the endoplasmic reticulum membrane. In terms of biological role, involved in the initiation of assembly of the COPII coat required for the formation of transport vesicles from the endoplasmic reticulum (ER) and the selection of cargo molecules. Also involved in autophagy. The sequence is that of COPII coat assembly protein sec16 (sec16) from Neosartorya fischeri (strain ATCC 1020 / DSM 3700 / CBS 544.65 / FGSC A1164 / JCM 1740 / NRRL 181 / WB 181) (Aspergillus fischerianus).